The sequence spans 299 residues: ATP phosphoribosyltransferase (299 aa).

Belongs to the ATP phosphoribosyltransferase family. Long subfamily. In terms of assembly, equilibrium between an active dimeric form, an inactive hexameric form and higher aggregates. Interconversion between the various forms is largely reversible and is influenced by the natural substrates and inhibitors of the enzyme. The cofactor is Mg(2+).

Its subcellular location is the cytoplasm. It catalyses the reaction 1-(5-phospho-beta-D-ribosyl)-ATP + diphosphate = 5-phospho-alpha-D-ribose 1-diphosphate + ATP. The protein operates within amino-acid biosynthesis; L-histidine biosynthesis; L-histidine from 5-phospho-alpha-D-ribose 1-diphosphate: step 1/9. With respect to regulation, feedback inhibited by histidine. Functionally, catalyzes the condensation of ATP and 5-phosphoribose 1-diphosphate to form N'-(5'-phosphoribosyl)-ATP (PR-ATP). Has a crucial role in the pathway because the rate of histidine biosynthesis seems to be controlled primarily by regulation of HisG enzymatic activity. The sequence is that of ATP phosphoribosyltransferase from Escherichia coli O81 (strain ED1a).